Reading from the N-terminus, the 221-residue chain is MPGTGKMKHVSLTLQVENDLKHQLSIGALKPGARLITKNLAEQLGMSITPVREALLRLVSVNALSVAPAQAFTVPEVGKRQLDEINRIRYELELMAVALAVENLTPQDLAELQELLEKLQQAQEKGDMEQIINVNRLFRLAIYHRSNMPILCEMIEQLWVRMGPGLHYLYEAINPAELREHIENYHLLLAALKAKDKEGCRHCLAEIMQQNIAILYQQYNR.

One can recognise an HTH gntR-type domain in the interval 10 to 77 (VSLTLQVEND…PAQAFTVPEV (68 aa)). The segment at residues 37–56 (TKNLAEQLGMSITPVREALL) is a DNA-binding region (H-T-H motif).

Its function is as follows. Important for biofilm formation. Represses expression of McbA by binding to its promoter region, which prevents colanic acid overproduction and mucoidy. In Escherichia coli (strain K12), this protein is HTH-type transcriptional regulator McbR (mcbR).